We begin with the raw amino-acid sequence, 724 residues long: Probable ATP-dependent RNA helicase DDX4 (724 aa).

Residues 1-11 are compositionally biased toward acidic residues; the sequence is MSGQEDWESEI. Disordered regions lie at residues 1–25 and 37–241; these read MSGQ…SNSE and SSNN…QGPR. Positions 108–130 are enriched in basic and acidic residues; that stretch reads SNGKQESGDFTNDDNRTIDDNRR. The span at 168-182 shows a compositional bias: polar residues; it reads EQSGFTSNDGFNNET. The short motif at 286 to 314 is the Q motif element; it reads LTFEEANLCDSLAKNVCKSGYVKLTPIQK. The Helicase ATP-binding domain maps to 317 to 500; sequence IPIIVAGRDL…REILKPDYLF (184 aa). 330 to 337 contributes to the ATP binding site; the sequence is AQTGSGKT. Positions 444–447 match the DEAD box motif; that stretch reads DEAD. A Helicase C-terminal domain is found at 512 to 675; the sequence is DVEQMVIEVD…EVPAWLEEVA (164 aa). The segment covering 683–692 has biased composition (polar residues); it reads AYNPRSNKFA. Residues 683 to 724 form a disordered region; it reads AYNPRSNKFASTDDRKRGDSRGDYSTSGFSPSAAQAEEEDWG. Positions 693–704 are enriched in basic and acidic residues; that stretch reads STDDRKRGDSRG. Over residues 705–715 the composition is skewed to polar residues; that stretch reads DYSTSGFSPSA.

This sequence belongs to the DEAD box helicase family. DDX4/VASA subfamily.

Its subcellular location is the cytoplasm. The enzyme catalyses ATP + H2O = ADP + phosphate + H(+). Probable ATP-dependent RNA helicase required during spermatogenesis to repress transposable elements and preventing their mobilization, which is essential for the germline integrity. Acts via the piRNA metabolic process, which mediates the repression of transposable elements during meiosis by forming complexes composed of piRNAs and Piwi proteins and governs the methylation and subsequent repression of transposons. Involved in the secondary piRNAs metabolic process, the production of piRNAs in fetal male germ cells through a ping-pong amplification cycle. In Pelophylax lessonae (Pool frog), this protein is Probable ATP-dependent RNA helicase DDX4.